The chain runs to 367 residues: Uptake hydrogenase small subunit (367 aa).

A signal peptide (tat-type signal) is located at residues Met-1 to Ala-45. Positions 62, 65, 160, 194, 232, 235, 260, and 266 each coordinate [4Fe-4S] cluster. Positions 275, 294, and 297 each coordinate [3Fe-4S] cluster.

Belongs to the [NiFe]/[NiFeSe] hydrogenase small subunit family. As to quaternary structure, heterodimer of a large and a small subunit. [4Fe-4S] cluster is required as a cofactor. The cofactor is [3Fe-4S] cluster. Predicted to be exported by the Tat system. The position of the signal peptide cleavage has been experimentally proven.

The protein localises to the cell membrane. It carries out the reaction H2 + A = AH2. This enzyme recycles the H(2) produced by nitrogenase to increase the production of ATP and to protect nitrogenase against inhibition or damage by O(2) under carbon- or phosphate-limited conditions. This is Uptake hydrogenase small subunit (hoxS) from Afipia carboxidovorans (strain ATCC 49405 / DSM 1227 / KCTC 32145 / OM5) (Oligotropha carboxidovorans).